The chain runs to 256 residues: MLDHLEIAGRNFSSRLIVGTGKYKNFDETVKAIEASGAEVVTVALKRVNITDNKRESLQDYLDPKKYTYLPNTAFCFTAGEAVRHLALAREIGGWNLVKVEVFSEKEFLYPDMRETLKAVKILAGEGFHVMPYCNDDPIMCKRLEESGAVAIMPLAAPIGSGLGIQNLFNLKVIVKQSSVPVIVDAGVGTPSDAVIAMEAGCDGVLINTSIAKARFPVQMAKAMKHAVRAGRLGYLAGRMLPQQFASPSSNSSGIV.

K99 functions as the Schiff-base intermediate with DXP in the catalytic mechanism. 1-deoxy-D-xylulose 5-phosphate is bound by residues G160, 186–187 (AG), and 208–209 (NT).

This sequence belongs to the ThiG family. In terms of assembly, homotetramer. Forms heterodimers with either ThiH or ThiS.

The protein localises to the cytoplasm. The catalysed reaction is [ThiS sulfur-carrier protein]-C-terminal-Gly-aminoethanethioate + 2-iminoacetate + 1-deoxy-D-xylulose 5-phosphate = [ThiS sulfur-carrier protein]-C-terminal Gly-Gly + 2-[(2R,5Z)-2-carboxy-4-methylthiazol-5(2H)-ylidene]ethyl phosphate + 2 H2O + H(+). The protein operates within cofactor biosynthesis; thiamine diphosphate biosynthesis. In terms of biological role, catalyzes the rearrangement of 1-deoxy-D-xylulose 5-phosphate (DXP) to produce the thiazole phosphate moiety of thiamine. Sulfur is provided by the thiocarboxylate moiety of the carrier protein ThiS. In vitro, sulfur can be provided by H(2)S. This chain is Thiazole synthase, found in Neorickettsia sennetsu (strain ATCC VR-367 / Miyayama) (Ehrlichia sennetsu).